A 613-amino-acid polypeptide reads, in one-letter code: Apoptosis-inducing factor 1, mitochondrial (613 aa).

2 short sequence motifs (mitochondrial localization signal) span residues 1–31 and 63–89; these read MFRCGGLAAGALKQKLVPLVRTVCVRSPRQR and KIDNSVLVLIVGLSTVGAGAYAYKTMK. Residues 1 to 54 constitute a mitochondrion transit peptide; that stretch reads MFRCGGLAAGALKQKLVPLVRTVCVRSPRQRNRLPGNLFQRWHVPLELQMTRQM. Residues 55–101 constitute a propeptide, removed in mature form; the sequence is ASSGASGGKIDNSVLVLIVGLSTVGAGAYAYKTMKEDEKRYNERISG. The interval 100–127 is disordered; that stretch reads SGLGLTPEQKQKKAALSASEGEEVPQDK. The residue at position 105 (Thr-105) is a Phosphothreonine. Lys-109 carries the N6-succinyllysine modification. Ser-116 and Ser-118 each carry phosphoserine. The FAD-dependent oxidoreductase stretch occupies residues 134-483; it reads FLLIGGGTAA…KPYWHQSMFW (350 aa). Residues 138-142, 164-165, Arg-172, and Lys-177 contribute to the FAD site; these read GGGTA and ED. Trp-196 contributes to the NAD(+) binding site. An FAD-binding site is contributed by Val-233. A Glycyl lysine isopeptide (Lys-Gly) (interchain with G-Cter in ubiquitin) cross-link involves residue Lys-255. Ser-268 carries the phosphoserine modification. Arg-285 serves as a coordination point for FAD. Ser-292 is modified (phosphoserine). NAD(+) is bound by residues 308–311, Glu-336, and Lys-342; that span reads GGFL. Phosphoserine is present on Ser-371. An N6-acetyllysine modification is found at Lys-388. NAD(+) is bound at residue Gly-399. Asp-438 contributes to the FAD binding site. The short motif at 446–451 is the Nuclear localization signal element; it reads KLGRRR. NAD(+) is bound by residues 453 to 454, Trp-483, and Glu-493; that span reads EH. Residues 454-455 and Trp-483 each bind FAD; that span reads HH. Positions 513–529 are enriched in polar residues; that stretch reads AQDNPKSATEQSGTGIR. Residues 513–554 form a disordered region; the sequence is AQDNPKSATEQSGTGIRSESETESEASEITIPPSTPAVPQAP. Thr-521 is modified (phosphothreonine). Residues Ser-524 and Ser-530 each carry the phosphoserine modification. An NAD(+)-binding site is contributed by Asn-583. Lys-593 bears the N6-acetyllysine mark.

The protein belongs to the FAD-dependent oxidoreductase family. Monomer (oxidized form). Homodimer (reduced form). Upon reduction with NADH, undergoes dimerization and forms tight, long-lived FADH2-NAD charge transfer complexes (CTC) resistant to oxidation. Also dimerizes with isoform 3 preventing its release from mitochondria. Interacts with XIAP/BIRC4. Interacts (via N-terminus) with EIF3G (via C-terminus). Interacts with PRELID1. Interacts with CHCHD4; the interaction increases in presence of NADH. Interacts with processed form of PARP1 (Poly [ADP-ribose] polymerase 1, processed C-terminus); interaction is mediated with poly-ADP-ribose chains attached to PARP1, promoting translocation into the nucleus. Requires FAD as cofactor. Under normal conditions, a 54-residue N-terminal segment is first proteolytically removed during or just after translocation into the mitochondrial intermembrane space (IMS) by the mitochondrial processing peptidase (MPP) to form the inner-membrane-anchored mature form (AIFmit). During apoptosis, it is further proteolytically processed at amino-acid position 101 leading to the generation of the mature form, which is confined to the mitochondrial IMS in a soluble form (AIFsol). AIFsol is released to the cytoplasm in response to specific death signals, and translocated to the nucleus, where it induces nuclear apoptosis in a caspase-independent manner. Post-translationally, ubiquitination by XIAP/BIRC4 does not lead to proteasomal degradation. Ubiquitination at Lys-255 by XIAP/BIRC4 blocks its ability to bind DNA and induce chromatin degradation, thereby inhibiting its ability to induce cell death. Expressed in all tested tissues. Detected in muscle and skin fibroblasts (at protein level). Expressed in osteoblasts (at protein level). As to expression, brain specific. In terms of tissue distribution, expressed in all tested tissues except brain. Isoform 5 is frequently down-regulated in human cancers.

It localises to the mitochondrion intermembrane space. It is found in the mitochondrion inner membrane. The protein localises to the cytoplasm. The protein resides in the nucleus. Its subcellular location is the perinuclear region. It localises to the mitochondrion. It is found in the cytosol. The catalysed reaction is A + NADH + H(+) = AH2 + NAD(+). Functions both as NADH oxidoreductase and as regulator of apoptosis. In response to apoptotic stimuli, it is released from the mitochondrion intermembrane space into the cytosol and to the nucleus, where it functions as a proapoptotic factor in a caspase-independent pathway. Release into the cytoplasm is mediated upon binding to poly-ADP-ribose chains. The soluble form (AIFsol) found in the nucleus induces 'parthanatos' i.e. caspase-independent fragmentation of chromosomal DNA. Binds to DNA in a sequence-independent manner. Interacts with EIF3G, and thereby inhibits the EIF3 machinery and protein synthesis, and activates caspase-7 to amplify apoptosis. Plays a critical role in caspase-independent, pyknotic cell death in hydrogen peroxide-exposed cells. In contrast, participates in normal mitochondrial metabolism. Plays an important role in the regulation of respiratory chain biogenesis by interacting with CHCHD4 and controlling CHCHD4 mitochondrial import. Functionally, has NADH oxidoreductase activity. Does not induce nuclear apoptosis. Its function is as follows. Pro-apoptotic isoform. In Homo sapiens (Human), this protein is Apoptosis-inducing factor 1, mitochondrial.